Here is a 173-residue protein sequence, read N- to C-terminus: Adenine phosphoribosyltransferase (173 aa).

It belongs to the purine/pyrimidine phosphoribosyltransferase family. As to quaternary structure, homodimer.

The protein resides in the cytoplasm. It carries out the reaction AMP + diphosphate = 5-phospho-alpha-D-ribose 1-diphosphate + adenine. Its pathway is purine metabolism; AMP biosynthesis via salvage pathway; AMP from adenine: step 1/1. Catalyzes a salvage reaction resulting in the formation of AMP, that is energically less costly than de novo synthesis. In Methanococcus vannielii (strain ATCC 35089 / DSM 1224 / JCM 13029 / OCM 148 / SB), this protein is Adenine phosphoribosyltransferase.